A 244-amino-acid polypeptide reads, in one-letter code: Biosynthetic peptidoglycan transglycosylase (244 aa).

A helical transmembrane segment spans residues 25 to 45 (LLLLLTAALLYQSWFLLHIVY).

The protein belongs to the glycosyltransferase 51 family.

It is found in the cell inner membrane. The catalysed reaction is [GlcNAc-(1-&gt;4)-Mur2Ac(oyl-L-Ala-gamma-D-Glu-L-Lys-D-Ala-D-Ala)](n)-di-trans,octa-cis-undecaprenyl diphosphate + beta-D-GlcNAc-(1-&gt;4)-Mur2Ac(oyl-L-Ala-gamma-D-Glu-L-Lys-D-Ala-D-Ala)-di-trans,octa-cis-undecaprenyl diphosphate = [GlcNAc-(1-&gt;4)-Mur2Ac(oyl-L-Ala-gamma-D-Glu-L-Lys-D-Ala-D-Ala)](n+1)-di-trans,octa-cis-undecaprenyl diphosphate + di-trans,octa-cis-undecaprenyl diphosphate + H(+). It participates in cell wall biogenesis; peptidoglycan biosynthesis. Functionally, peptidoglycan polymerase that catalyzes glycan chain elongation from lipid-linked precursors. This is Biosynthetic peptidoglycan transglycosylase from Nitrosomonas europaea (strain ATCC 19718 / CIP 103999 / KCTC 2705 / NBRC 14298).